Consider the following 122-residue polypeptide: Large ribosomal subunit protein uL14 (122 aa).

Belongs to the universal ribosomal protein uL14 family. In terms of assembly, part of the 50S ribosomal subunit. Forms a cluster with proteins L3 and L19. In the 70S ribosome, L14 and L19 interact and together make contacts with the 16S rRNA in bridges B5 and B8.

In terms of biological role, binds to 23S rRNA. Forms part of two intersubunit bridges in the 70S ribosome. This chain is Large ribosomal subunit protein uL14, found in Clavibacter michiganensis subsp. michiganensis (strain NCPPB 382).